The following is a 68-amino-acid chain: UPF0434 protein BMA10229_A1047 (68 aa).

The protein belongs to the UPF0434 family.

This chain is UPF0434 protein BMA10229_A1047, found in Burkholderia mallei (strain NCTC 10229).